Consider the following 270-residue polypeptide: Phosphatidylglycerol--prolipoprotein diacylglyceryl transferase (270 aa).

Transmembrane regions (helical) follow at residues 19 to 39 (FPVY…LWLA), 56 to 76 (LVLI…VIFE), 92 to 112 (QGGL…ILFA), and 116 to 136 (GVSF…GQAI). An a 1,2-diacyl-sn-glycero-3-phospho-(1'-sn-glycerol)-binding site is contributed by Arg138. A run of 3 helical transmembrane segments spans residues 178 to 198 (HPTF…LLAL), 206 to 226 (GELF…VEGL), and 236 to 256 (LRIA…FIIV).

The protein belongs to the Lgt family.

It is found in the cell membrane. It catalyses the reaction L-cysteinyl-[prolipoprotein] + a 1,2-diacyl-sn-glycero-3-phospho-(1'-sn-glycerol) = an S-1,2-diacyl-sn-glyceryl-L-cysteinyl-[prolipoprotein] + sn-glycerol 1-phosphate + H(+). Its pathway is protein modification; lipoprotein biosynthesis (diacylglyceryl transfer). Its function is as follows. Catalyzes the transfer of the diacylglyceryl group from phosphatidylglycerol to the sulfhydryl group of the N-terminal cysteine of a prolipoprotein, the first step in the formation of mature lipoproteins. This is Phosphatidylglycerol--prolipoprotein diacylglyceryl transferase from Bacillus cereus (strain ZK / E33L).